The primary structure comprises 1174 residues: DNA-directed RNA polymerase subunit beta (1174 aa).

Belongs to the RNA polymerase beta chain family. As to quaternary structure, the RNAP catalytic core consists of 2 alpha, 1 beta, 1 beta' and 1 omega subunit. When a sigma factor is associated with the core the holoenzyme is formed, which can initiate transcription.

The catalysed reaction is RNA(n) + a ribonucleoside 5'-triphosphate = RNA(n+1) + diphosphate. Functionally, DNA-dependent RNA polymerase catalyzes the transcription of DNA into RNA using the four ribonucleoside triphosphates as substrates. The chain is DNA-directed RNA polymerase subunit beta from Mycolicibacterium gilvum (strain PYR-GCK) (Mycobacterium gilvum (strain PYR-GCK)).